The chain runs to 310 residues: HTH-type transcriptional regulator CbbR (310 aa).

The HTH lysR-type domain occupies 7–64 (ITLKQLRALVAVAGSASLTGGATRLGLTPPAIHSQIRNLEEAFGVPLLHRPPETGSFT). The segment at residues 24–43 (LTGGATRLGLTPPAIHSQIR) is a DNA-binding region (H-T-H motif).

The protein belongs to the LysR transcriptional regulatory family.

Functionally, transcriptional activator for the cbb operon for RuBisCO and other Calvin cycle genes. The chain is HTH-type transcriptional regulator CbbR (cbbR) from Cereibacter sphaeroides (Rhodobacter sphaeroides).